The sequence spans 599 residues: Beta-(1--&gt;2)glucan export ATP-binding/permease protein NdvA (599 aa).

Positions 21–301 constitute an ABC transmembrane type-1 domain; that stretch reads TITMCVASVL…ISAFINQTVT (281 aa). A run of 5 helical transmembrane segments spans residues 22-42, 55-75, 156-176, 248-268, and 276-296; these read ITMCVASVLVALVTLAEPVLF, IFSPLLMWAALGGFNIMAAVF, MRMSLVLIVLGVIYVMIGQLV, MASTFSMVVVLVLGAYFVTKG, and IAFIGFAQLMIGRLDQISAFI. The ABC transporter domain maps to 335-569; the sequence is IVFDNVTFEF…GGRFSDLLRA (235 aa). Residue 368–375 participates in ATP binding; that stretch reads GPTGAGKT.

It belongs to the ABC transporter superfamily. Beta-(1--&gt;2)glucan exporter (TC 3.A.1.108.1) family. In terms of assembly, homodimer.

Its subcellular location is the cell inner membrane. It catalyses the reaction [(1-&gt;2)-beta-D-glucosyl](n)(in) + ATP + H2O = [(1-&gt;2)-beta-D-glucosyl](n)(out) + ADP + phosphate + H(+). Its function is as follows. Involved in beta-(1--&gt;2)glucan export. Transmembrane domains (TMD) form a pore in the inner membrane and the ATP-binding domain (NBD) is responsible for energy generation. The sequence is that of Beta-(1--&gt;2)glucan export ATP-binding/permease protein NdvA from Brucella suis biovar 1 (strain 1330).